Here is a 138-residue protein sequence, read N- to C-terminus: Sec-independent protein translocase protein TatB (138 aa).

A helical transmembrane segment spans residues 1 to 21 (MFDIGATELLVIAIVAILVIG). The interval 74-138 (MAKHPADQMQ…EPRLPLEGRD (65 aa)) is disordered. Over residues 83–97 (QPLDAPDPALSAAEA) the composition is skewed to low complexity. Residues 98-138 (RAAHTEAAKPARAAEETQADRASADEHPAASEPRLPLEGRD) are compositionally biased toward basic and acidic residues.

This sequence belongs to the TatB family. In terms of assembly, the Tat system comprises two distinct complexes: a TatABC complex, containing multiple copies of TatA, TatB and TatC subunits, and a separate TatA complex, containing only TatA subunits. Substrates initially bind to the TatABC complex, which probably triggers association of the separate TatA complex to form the active translocon.

Its subcellular location is the cell inner membrane. Functionally, part of the twin-arginine translocation (Tat) system that transports large folded proteins containing a characteristic twin-arginine motif in their signal peptide across membranes. Together with TatC, TatB is part of a receptor directly interacting with Tat signal peptides. TatB may form an oligomeric binding site that transiently accommodates folded Tat precursor proteins before their translocation. The sequence is that of Sec-independent protein translocase protein TatB from Erythrobacter litoralis (strain HTCC2594).